A 454-amino-acid polypeptide reads, in one-letter code: Retinoblastoma-binding protein homolog 5 (454 aa).

6 WD repeats span residues 23–64 (LQNA…RTFS), 65–104 (AHCL…LLHR), 153–192 (SSDE…CVAW), 196–235 (NTVQ…HQRG), 248–288 (VNKA…LIKI), and 292–330 (NKGE…NWSA).

In terms of assembly, component of the SET2 complex (also known as the SET1/COMPASS complex), which contains at least set-2, swd-2.1, cfp-1, rbbp-5, wdr-5.1, dpy-30 and ash-2.

The protein resides in the nucleus. Required for di- and trimethylation at 'Lys-4' of histone H3. Regulates left/right asymmetry of ASE sensory neurons, via its role as a component of the SET2 complex. This is Retinoblastoma-binding protein homolog 5 (rbbp-5) from Caenorhabditis elegans.